A 558-amino-acid chain; its full sequence is Dihydroxy-acid dehydratase (558 aa).

Residue D78 coordinates Mg(2+). Residue C119 participates in [2Fe-2S] cluster binding. Residues D120 and K121 each coordinate Mg(2+). Residue K121 is modified to N6-carboxylysine. Residue C192 coordinates [2Fe-2S] cluster. E446 contributes to the Mg(2+) binding site. S472 functions as the Proton acceptor in the catalytic mechanism.

The protein belongs to the IlvD/Edd family. As to quaternary structure, homodimer. The cofactor is [2Fe-2S] cluster. It depends on Mg(2+) as a cofactor.

The catalysed reaction is (2R)-2,3-dihydroxy-3-methylbutanoate = 3-methyl-2-oxobutanoate + H2O. The enzyme catalyses (2R,3R)-2,3-dihydroxy-3-methylpentanoate = (S)-3-methyl-2-oxopentanoate + H2O. It participates in amino-acid biosynthesis; L-isoleucine biosynthesis; L-isoleucine from 2-oxobutanoate: step 3/4. The protein operates within amino-acid biosynthesis; L-valine biosynthesis; L-valine from pyruvate: step 3/4. In terms of biological role, functions in the biosynthesis of branched-chain amino acids. Catalyzes the dehydration of (2R,3R)-2,3-dihydroxy-3-methylpentanoate (2,3-dihydroxy-3-methylvalerate) into 2-oxo-3-methylpentanoate (2-oxo-3-methylvalerate) and of (2R)-2,3-dihydroxy-3-methylbutanoate (2,3-dihydroxyisovalerate) into 2-oxo-3-methylbutanoate (2-oxoisovalerate), the penultimate precursor to L-isoleucine and L-valine, respectively. This Campylobacter jejuni subsp. jejuni serotype O:23/36 (strain 81-176) protein is Dihydroxy-acid dehydratase.